A 390-amino-acid chain; its full sequence is Phosphoglycerate kinase (390 aa).

Substrate is bound by residues 21 to 23 (DLN), Arg36, 59 to 62 (HLGR), Arg114, and Arg147. ATP-binding positions include Lys198, Glu314, and 340–343 (GGDT).

This sequence belongs to the phosphoglycerate kinase family. As to quaternary structure, monomer.

The protein localises to the cytoplasm. The catalysed reaction is (2R)-3-phosphoglycerate + ATP = (2R)-3-phospho-glyceroyl phosphate + ADP. Its pathway is carbohydrate degradation; glycolysis; pyruvate from D-glyceraldehyde 3-phosphate: step 2/5. This is Phosphoglycerate kinase (pgk) from Buchnera aphidicola subsp. Acyrthosiphon pisum (strain APS) (Acyrthosiphon pisum symbiotic bacterium).